We begin with the raw amino-acid sequence, 100 residues long: Cystatin-B (100 aa).

The Cystatin domain occupies G6 to Q88. The Secondary area of contact motif lies at Q48 to G52.

It belongs to the cystatin family. As to expression, widely expressed. Highly expressed in liver and to a lesser extent in spleen, gill, brain, intestine, kidney, head kidney and blood. Lowest level in muscle.

The protein localises to the cytoplasm. Functionally, thiol protease inhibitor. Has papain inhibitory activity in vitro. May be involved in immune responses against invading Gram-negative bacteria. This Oplegnathus fasciatus (Barred knifejaw) protein is Cystatin-B.